Here is a 421-residue protein sequence, read N- to C-terminus: ATP-dependent RNA helicase RhlB (421 aa).

Residues 9 to 37 (QKFSDFALHPKVIEALENKGFHNCTPIQA) carry the Q motif motif. One can recognise a Helicase ATP-binding domain in the interval 40–219 (LPLTLAGRDV…FEQMNNAEYV (180 aa)). ATP is bound at residue 53–60 (AQTGTGKT). Positions 165–168 (DEAD) match the DEAD box motif. In terms of domain architecture, Helicase C-terminal spans 245–390 (RLLQTLIEEE…VSKYNPEALM (146 aa)). Positions 393–421 (LPKPLRLTRSRPGNGPRRTGAPRNRRRSG) are disordered. Low complexity predominate over residues 403–414 (RPGNGPRRTGAP).

The protein belongs to the DEAD box helicase family. RhlB subfamily. As to quaternary structure, component of the RNA degradosome, which is a multiprotein complex involved in RNA processing and mRNA degradation.

The protein localises to the cytoplasm. The enzyme catalyses ATP + H2O = ADP + phosphate + H(+). In terms of biological role, DEAD-box RNA helicase involved in RNA degradation. Has RNA-dependent ATPase activity and unwinds double-stranded RNA. This chain is ATP-dependent RNA helicase RhlB, found in Citrobacter koseri (strain ATCC BAA-895 / CDC 4225-83 / SGSC4696).